A 749-amino-acid polypeptide reads, in one-letter code: Chaperone protein dnaK3 (749 aa).

Threonine 198 carries the phosphothreonine; by autocatalysis modification. Basic and acidic residues-rich tracts occupy residues 643 to 653 (RWDADPWDRSR), 661 to 694 (YDDR…RDRN), and 711 to 724 (PTWE…RDRS). Residues 643 to 749 (RWDADPWDRS…GWDDDDDEWF (107 aa)) form a disordered region. Positions 740–749 (GWDDDDDEWF) are enriched in acidic residues.

This sequence belongs to the heat shock protein 70 family.

Acts as a chaperone. The polypeptide is Chaperone protein dnaK3 (dnaK3) (Synechococcus elongatus (strain ATCC 33912 / PCC 7942 / FACHB-805) (Anacystis nidulans R2)).